Here is a 274-residue protein sequence, read N- to C-terminus: Eukaryotic translation initiation factor 3 subunit J (274 aa).

2 disordered regions span residues methionine 1 to histidine 120 and glutamate 227 to serine 246. Residues aspartate 30 to valine 50 show a composition bias toward acidic residues. Residues glutamate 46–glutamate 112 are a coiled coil. 2 stretches are compositionally biased toward basic and acidic residues: residues glutamate 51–alanine 67 and arginine 79–alanine 92. Residues glutamate 93 to glutamate 102 are compositionally biased toward acidic residues. A compositionally biased stretch (basic and acidic residues) spans alanine 103 to histidine 120.

This sequence belongs to the eIF-3 subunit J family. Component of the eukaryotic translation initiation factor 3 (eIF-3) complex.

It localises to the cytoplasm. Component of the eukaryotic translation initiation factor 3 (eIF-3) complex, which is involved in protein synthesis of a specialized repertoire of mRNAs and, together with other initiation factors, stimulates binding of mRNA and methionyl-tRNAi to the 40S ribosome. The eIF-3 complex specifically targets and initiates translation of a subset of mRNAs involved in cell proliferation. The polypeptide is Eukaryotic translation initiation factor 3 subunit J (hcr-1) (Neurospora crassa (strain ATCC 24698 / 74-OR23-1A / CBS 708.71 / DSM 1257 / FGSC 987)).